Here is a 209-residue protein sequence, read N- to C-terminus: Ribonuclease HII (209 aa).

The RNase H type-2 domain occupies 20-209; that stretch reads GLVAGVDEAG…VARSLPGACR (190 aa). 3 residues coordinate a divalent metal cation: Asp-26, Glu-27, and Asp-118.

Belongs to the RNase HII family. Mn(2+) serves as cofactor. Requires Mg(2+) as cofactor.

It is found in the cytoplasm. The enzyme catalyses Endonucleolytic cleavage to 5'-phosphomonoester.. In terms of biological role, endonuclease that specifically degrades the RNA of RNA-DNA hybrids. The chain is Ribonuclease HII from Verminephrobacter eiseniae (strain EF01-2).